A 1592-amino-acid chain; its full sequence is ABC transporter ATP-binding protein/permease VMR1 (1592 aa).

At 1–33 (MGTDPLIIRNNGSFWEVDDFTRLGRTQLLSYYL) the chain is on the vacuolar side. N-linked (GlcNAc...) asparagine glycosylation is present at Asn-11. A helical membrane pass occupies residues 34–54 (PLAIIASIGIFALCRSGLSRY). At 55–74 (VRSAECDLVNEYLFGAQEER) the chain is on the cytoplasmic side. Residues 75-95 (KEDNSIERLLRNSNTQANYVN) traverse the membrane as a helical segment. Topologically, residues 96–100 (VKKQG) are vacuolar. A helical transmembrane segment spans residues 101 to 121 (RILKLRHFDITTIDVKQIDAK). At 122–131 (NHGGLTFSRP) the chain is on the cytoplasmic side. Residues 132–152 (STSDHLRKSSEIVLMSLQIIG) traverse the membrane as a helical segment. The Vacuolar portion of the chain corresponds to 153–170 (LSFLRVTKINIELTNRDV). The chain crosses the membrane as a helical span at residues 171 to 191 (TTLLLFWLILLSLSILRVYKR). The Cytoplasmic portion of the chain corresponds to 192–329 (STNLWAICFT…NKHINNLTLA (138 aa)). Residues 330-350 (LFESFKTYLLIGMLWVLVNSI) traverse the membrane as a helical segment. Residues 338–632 (LLIGMLWVLV…LSNMLSFINQ (295 aa)) form the ABC transmembrane type-1 1 domain. At 351-379 (VNLLPTILMKRFLEIVDNPNRSSSCMNLA) the chain is on the vacuolar side. N-linked (GlcNAc...) asparagine glycosylation occurs at Asn-370. A helical transmembrane segment spans residues 380–400 (WLYIIGMFICRLTLAICNSQG). Topologically, residues 401–465 (QFVSDKICLR…SFKVSELANY (65 aa)) are cytoplasmic. The helical transmembrane segment at 466-486 (LYVTVQAVIMIIVVVGLLFNF) threads the bilayer. The Vacuolar portion of the chain corresponds to 487–489 (LGV). Residues 490-510 (SAFAGISIILVMFPLNFLLAN) traverse the membrane as a helical segment. Topologically, residues 511-572 (LLGKFQKQTL…SLLKKSLVWS (62 aa)) are cytoplasmic. A helical membrane pass occupies residues 573 to 593 (VTSFLWFVTPTLVTGVTFAIC). Residues 594–614 (TFVQHEDLNAPLAFTTLSLFT) lie on the Vacuolar side of the membrane. The helical transmembrane segment at 615-635 (LLKTPLDQLSNMLSFINQSKV) threads the bilayer. At 636–989 (SLKRISDFLR…ALTALFALYI (354 aa)) the chain is on the cytoplasmic side. The ABC transporter 1 domain occupies 664–908 (IEFKNATLTW…GLFKEKYVQL (245 aa)). 702–709 (GSTGSGKS) contributes to the ATP binding site. In terms of domain architecture, ABC transmembrane type-1 2 spans 981–1282 (LTALFALYIT…LVRLYSTFEM (302 aa)). The chain crosses the membrane as a helical span at residues 990-1010 (TAQILFISQSWWIRHWVNDTN). Residues 1011-1051 (VRINAPGFAMDTLPLKGMTDSSKNKHNAFYYLTVYFLIGII) lie on the Vacuolar side of the membrane. The chain crosses the membrane as a helical span at residues 1052-1072 (QAMLGGFKTMMTFLSGMRASR). Topologically, residues 1073-1115 (KIFNNLLDLVLHAQIRFFDVTPVGRIMNRFSKDIEGVDQELIP) are cytoplasmic. A helical membrane pass occupies residues 1116-1136 (YLEVTIFCLIQCASIIFLITV). Residue Ile-1137 is a topological domain, vacuolar. The chain crosses the membrane as a helical span at residues 1138 to 1158 (TPRFLTVAVIVFVLYFFVGKW). Over 1159–1229 (YLTASRELKR…VTVKWFSFRV (71 aa)) the chain is Cytoplasmic. Residues 1230–1250 (DMIGAFIVLASGSFILLNIAN) traverse the membrane as a helical segment. Over 1251–1252 (ID) the chain is Vacuolar. A helical transmembrane segment spans residues 1253–1273 (SGLAGISLTYAILFTDGALWL). At 1274–1592 (VRLYSTFEMN…IAKQSSKMMK (319 aa)) the chain is on the cytoplasmic side. The region spanning 1323-1572 (IEIENLSLRY…ERGIFYSMCR (250 aa)) is the ABC transporter 2 domain. 1357–1364 (GRTGAGKS) contacts ATP.

This sequence belongs to the ABC transporter superfamily. As to quaternary structure, ABC transporter which may be involved in multidrug resistance.

The protein localises to the vacuole membrane. The protein is ABC transporter ATP-binding protein/permease VMR1 (VMR1) of Saccharomyces cerevisiae (strain ATCC 204508 / S288c) (Baker's yeast).